Here is an 826-residue protein sequence, read N- to C-terminus: Zinc phosphodiesterase ELAC protein 2 (826 aa).

The N-terminal 16 residues, 1-16 (MWALCSLLRSAAGRTM), are a transit peptide targeting the mitochondrion. Disordered stretches follow at residues 16–51 (MSQGRTISQAPARRERPRKDPLRHLRTREKRGPSGC) and 188–231 (EQRR…VSQR). A compositionally biased stretch (basic and acidic residues) spans 27–38 (ARRERPRKDPLR). A phosphoserine mark is found at Ser199, Ser208, Ser212, Ser229, Ser618, and Ser736. Positions 208–224 (SPERSSDSESNENEPHL) are enriched in basic and acidic residues. The segment at 798–826 (ELAGGLEDGEPQQKRAHTEEPQAKKVRAQ) is disordered. The segment covering 808–820 (PQQKRAHTEEPQA) has biased composition (basic and acidic residues).

Belongs to the RNase Z family. In terms of assembly, homodimer. Interacts with PTCD1. Zn(2+) serves as cofactor.

It is found in the mitochondrion. The protein localises to the mitochondrion matrix. Its subcellular location is the mitochondrion nucleoid. It localises to the nucleus. The catalysed reaction is Endonucleolytic cleavage of RNA, removing extra 3' nucleotides from tRNA precursor, generating 3' termini of tRNAs. A 3'-hydroxy group is left at the tRNA terminus and a 5'-phosphoryl group is left at the trailer molecule.. Its function is as follows. Zinc phosphodiesterase, which displays mitochondrial tRNA 3'-processing endonuclease activity. Involved in tRNA maturation, by removing a 3'-trailer from precursor tRNA. Associates with mitochondrial DNA complexes at the nucleoids to initiate RNA processing and ribosome assembly. The polypeptide is Zinc phosphodiesterase ELAC protein 2 (ELAC2) (Pan troglodytes (Chimpanzee)).